The primary structure comprises 325 residues: Tetraacyldisaccharide 4'-kinase (325 aa).

ATP is bound at residue 54-61; the sequence is SVGGTGKT.

This sequence belongs to the LpxK family.

It carries out the reaction a lipid A disaccharide + ATP = a lipid IVA + ADP + H(+). Its pathway is glycolipid biosynthesis; lipid IV(A) biosynthesis; lipid IV(A) from (3R)-3-hydroxytetradecanoyl-[acyl-carrier-protein] and UDP-N-acetyl-alpha-D-glucosamine: step 6/6. Functionally, transfers the gamma-phosphate of ATP to the 4'-position of a tetraacyldisaccharide 1-phosphate intermediate (termed DS-1-P) to form tetraacyldisaccharide 1,4'-bis-phosphate (lipid IVA). This chain is Tetraacyldisaccharide 4'-kinase, found in Rickettsia akari (strain Hartford).